We begin with the raw amino-acid sequence, 265 residues long: Phosphate import ATP-binding protein PstB 2 (265 aa).

In terms of domain architecture, ABC transporter spans 13 to 260 (FRTENLNVYY…PTKQATRDYV (248 aa)). Residue 45–52 (GPSGCGKS) participates in ATP binding.

The protein belongs to the ABC transporter superfamily. Phosphate importer (TC 3.A.1.7) family. The complex is composed of two ATP-binding proteins (PstB), two transmembrane proteins (PstC and PstA) and a solute-binding protein (PstS).

Its subcellular location is the cell inner membrane. The catalysed reaction is phosphate(out) + ATP + H2O = ADP + 2 phosphate(in) + H(+). Its function is as follows. Part of the ABC transporter complex PstSACB involved in phosphate import. Responsible for energy coupling to the transport system. The chain is Phosphate import ATP-binding protein PstB 2 from Synechococcus sp. (strain JA-2-3B'a(2-13)) (Cyanobacteria bacterium Yellowstone B-Prime).